The following is a 515-amino-acid chain: Maturase K (515 aa).

It belongs to the intron maturase 2 family. MatK subfamily.

It localises to the plastid. It is found in the chloroplast. In terms of biological role, usually encoded in the trnK tRNA gene intron. Probably assists in splicing its own and other chloroplast group II introns. The chain is Maturase K from Pinus pinea (Italian stone pine).